The chain runs to 378 residues: Metalloendoproteinase 2-MMP (378 aa).

Residues 1-20 form the signal peptide; it reads MRFCVFGFLSLFLIVSPASA. Positions 21-154 are cleaved as a propeptide — activation peptide; it reads WFFPNSTAVP…SRTHLHAVKR (134 aa). Residues Asn-25, Asn-35, Asn-46, Asn-79, and Asn-102 are each glycosylated (N-linked (GlcNAc...) asparagine). Positions 118-125 match the Cysteine switch motif; the sequence is PRCGNPDV. Zn(2+) is bound at residue Cys-120. 3 N-linked (GlcNAc...) asparagine glycosylation sites follow: Asn-127, Asn-143, and Asn-203. Residue His-280 participates in Zn(2+) binding. Glu-281 is an active-site residue. Zn(2+) is bound by residues His-284 and His-290. N-linked (GlcNAc...) asparagine glycosylation is present at Asn-330. Ser-349 is lipidated: GPI-anchor amidated serine. Residues 350–378 constitute a propeptide, removed in mature form; it reads AAWRIDGSSRSTIVSLLLSTVGLVLWFLP.

It belongs to the peptidase M10A family. Matrix metalloproteinases (MMPs) subfamily. Zn(2+) serves as cofactor. Mostly expressed in roots, and, to a lower extent, in flowers, leaves and stems.

Its subcellular location is the cell membrane. Repressed by acetohydroxamic acid (AHA). Matrix metalloproteinases (MMPs) or matrixins may play a role in the degradation and remodeling of the extracellular matrix (ECM) during development or in response to stresses. Required for plant growth, morphogenesis, and development with particular relevance for flowering and senescence. Active on McaPLGLDpaAR-NH(2) (QF24) and myelin basic protein (MBP) and, to some extent, on beta-casein. The polypeptide is Metalloendoproteinase 2-MMP (Arabidopsis thaliana (Mouse-ear cress)).